The chain runs to 215 residues: 3-isopropylmalate dehydratase small subunit (215 aa).

The protein belongs to the LeuD family. LeuD type 1 subfamily. Heterodimer of LeuC and LeuD.

The enzyme catalyses (2R,3S)-3-isopropylmalate = (2S)-2-isopropylmalate. Its pathway is amino-acid biosynthesis; L-leucine biosynthesis; L-leucine from 3-methyl-2-oxobutanoate: step 2/4. Its function is as follows. Catalyzes the isomerization between 2-isopropylmalate and 3-isopropylmalate, via the formation of 2-isopropylmaleate. The chain is 3-isopropylmalate dehydratase small subunit from Marinobacter nauticus (strain ATCC 700491 / DSM 11845 / VT8) (Marinobacter aquaeolei).